We begin with the raw amino-acid sequence, 500 residues long: Probable E3 ubiquitin-protein ligase ARI16 (500 aa).

The TRIAD supradomain stretch occupies residues 74-288 (NSNSSSADRE…QGNWNCSPVA (215 aa)). An RING-type 1 zinc finger spans residues 78–130 (SSADRETGDGDYLVSTPFCSHKFSTTCWSEYLSDALKKNKEQRGLISCLSQDC). Zn(2+)-binding residues include cysteine 96, histidine 98, cysteine 125, cysteine 130, cysteine 169, cysteine 174, cysteine 194, cysteine 196, cysteine 201, cysteine 204, histidine 209, cysteine 214, cysteine 241, cysteine 244, cysteine 261, cysteine 263, cysteine 268, cysteine 271, histidine 278, and cysteine 284. The IBR-type zinc finger occupies 148–214 (EMYENYILES…GLESHRPVSC (67 aa)). The RING-type 2; atypical zinc-finger motif lies at 241–271 (CPKCKIPVQQNGDPNYRLINCICSNNFCWIC). The segment at 453–483 (EPGSRWFCDRCTFENSWVDKQCKMCFFPLDY) adopts a RanBP2-type zinc-finger fold.

Belongs to the RBR family. Ariadne subfamily. The cofactor is Zn(2+). As to expression, preferentially expressed in green siliques.

It carries out the reaction [E2 ubiquitin-conjugating enzyme]-S-ubiquitinyl-L-cysteine + [acceptor protein]-L-lysine = [E2 ubiquitin-conjugating enzyme]-L-cysteine + [acceptor protein]-N(6)-ubiquitinyl-L-lysine.. The protein operates within protein modification; protein ubiquitination. Its function is as follows. Might act as an E3 ubiquitin-protein ligase, or as part of E3 complex, which accepts ubiquitin from specific E2 ubiquitin-conjugating enzymes and then transfers it to substrates. The protein is Probable E3 ubiquitin-protein ligase ARI16 (ARI16) of Arabidopsis thaliana (Mouse-ear cress).